Consider the following 254-residue polypeptide: GTP cyclohydrolase III (254 aa).

This sequence belongs to the archaeal-type GTP cyclohydrolase family.

It carries out the reaction GTP + 3 H2O = 2-amino-5-formylamino-6-(5-phospho-D-ribosylamino)pyrimidin-4(3H)-one + 2 phosphate + 2 H(+). Its function is as follows. Catalyzes the formation of 2-amino-5-formylamino-6-ribofuranosylamino-4(3H)-pyrimidinone ribonucleotide monophosphate and inorganic phosphate from GTP. Also has an independent pyrophosphate phosphohydrolase activity. This chain is GTP cyclohydrolase III, found in Methanobrevibacter smithii (strain ATCC 35061 / DSM 861 / OCM 144 / PS).